Here is a 298-residue protein sequence, read N- to C-terminus: Acetylglutamate kinase (298 aa).

Substrate is bound by residues 69-70, Arg-91, and Asn-191; that span reads GG.

Belongs to the acetylglutamate kinase family. ArgB subfamily.

The protein resides in the cytoplasm. The enzyme catalyses N-acetyl-L-glutamate + ATP = N-acetyl-L-glutamyl 5-phosphate + ADP. Its pathway is amino-acid biosynthesis; L-arginine biosynthesis; N(2)-acetyl-L-ornithine from L-glutamate: step 2/4. Catalyzes the ATP-dependent phosphorylation of N-acetyl-L-glutamate. This is Acetylglutamate kinase from Neisseria meningitidis serogroup C (strain 053442).